We begin with the raw amino-acid sequence, 151 residues long: Putative pre-16S rRNA nuclease (151 aa).

Belongs to the YqgF nuclease family.

It localises to the cytoplasm. Functionally, could be a nuclease involved in processing of the 5'-end of pre-16S rRNA. The polypeptide is Putative pre-16S rRNA nuclease (Onion yellows phytoplasma (strain OY-M)).